Consider the following 358-residue polypeptide: Feruloyl CoA ortho-hydroxylase F6H1-2 (358 aa).

The region spanning 200–308 (TKESLLMGSK…RISVPIFVNP (109 aa)) is the Fe2OG dioxygenase domain. Residue tyrosine 216 participates in 2-oxoglutarate binding. The Fe cation site is built by histidine 231, aspartate 233, and histidine 289. 2-oxoglutarate is bound by residues arginine 299 and serine 301.

Belongs to the iron/ascorbate-dependent oxidoreductase family. The cofactor is L-ascorbate. Fe(2+) is required as a cofactor. In terms of tissue distribution, expressed at low levels in tubers, underground stems, leaves and petioles.

The catalysed reaction is (E)-feruloyl-CoA + 2-oxoglutarate + O2 = (E)-6-hydroxyferuloyl-CoA + succinate + CO2. It participates in phenylpropanoid metabolism. Functionally, 2-oxoglutarate (OG)- and Fe(II)-dependent dioxygenase (2OGD) involved in scopoletin biosynthesis. Converts feruloyl CoA into 6'-hydroxyferuloyl CoA, and, at low efficiency, caffeoyl-CoA into 6'-hydroxycaffeate, but has no activity with p-coumaroyl-CoA. This chain is Feruloyl CoA ortho-hydroxylase F6H1-2, found in Ipomoea batatas (Sweet potato).